Here is an 87-residue protein sequence, read N- to C-terminus: Putative protein KleG (87 aa).

Disordered regions lie at residues 1–23 (MRHS…WPSS) and 61–87 (IPTT…IFSR). Residues 68–78 (RGRRPQRHRPS) are compositionally biased toward basic residues.

This chain is Putative protein KleG (kleG), found in Escherichia coli.